The chain runs to 695 residues: MSPARNTGIPASAADAARRHAELVKEIEEHAYRYYVLDAPTISDAEYDALMRELEEIENAYPELRTPDSPTQKVQGAPAAHFAPVEHLERMLSLDNVFTEGELRAWIARVEKEVGTDAAYLCEPKVDGLAVDLVYEDGVLVRGATRGDGRVGEDVTANIKAIRNVPHRLHRDGNLPALLEVRGEVYFPVADFAELNAGLVAAGKAPFANPRNAAAGSLRQKDPRVTASRPLRLVVHGIGAHQGLAAARQSEAYVALAAWGLPVSERAKVATTTKEILDYIAYYAEHRHDLEHEIDGVVVKVDQFALQRRLGATAKAPRWAVAYKYPPEEVTTKLLDIQVNVGRTGRVTPFAVMEPVRVAGSTVTNATLHNADEIKRKGVLIGDTVVVRKAGDVIPEVVGPVVALRDGSEREFVFPSHCPACGTPLVRENGGVDIRCPNARSCPAQLRERLFHIASRGALDIESLGYEAANALLESKLLADEGDLFLLTPEKLRTVPFFTKKDGELSANAVKLLENLESAKTRPLWRVLVALSIRHVGPTAARALAREFGSIDAIRNASVDELAAVEGVGRVIAESIRDWFAVDWHQEIVAKWSAAGVRMAEEQRSAAKPLAGITVVVTGTLSRWSRDSAIEAIQDAGGRAAGSVSKKTDFVVVGENPGSKYDKARQLGIPILDEEGFATLLTKGPDAARSMAQRP.

Residues 44 to 48, 93 to 94, and Glu123 contribute to the NAD(+) site; these read DAEYD and SL. Lys125 acts as the N6-AMP-lysine intermediate in catalysis. NAD(+)-binding residues include Arg146, Glu184, Lys300, and Lys324. Zn(2+) is bound by residues Cys418, Cys421, Cys436, and Cys442. The region spanning 605-694 is the BRCT domain; sequence SAAKPLAGIT…PDAARSMAQR (90 aa).

It belongs to the NAD-dependent DNA ligase family. LigA subfamily. Mg(2+) is required as a cofactor. Requires Mn(2+) as cofactor.

The enzyme catalyses NAD(+) + (deoxyribonucleotide)n-3'-hydroxyl + 5'-phospho-(deoxyribonucleotide)m = (deoxyribonucleotide)n+m + AMP + beta-nicotinamide D-nucleotide.. In terms of biological role, DNA ligase that catalyzes the formation of phosphodiester linkages between 5'-phosphoryl and 3'-hydroxyl groups in double-stranded DNA using NAD as a coenzyme and as the energy source for the reaction. It is essential for DNA replication and repair of damaged DNA. This chain is DNA ligase, found in Acidothermus cellulolyticus (strain ATCC 43068 / DSM 8971 / 11B).